The primary structure comprises 612 residues: Peroxisomal carnitine O-octanoyltransferase (612 aa).

M1 is modified (N-acetylmethionine). N6-succinyllysine is present on residues K40 and K57. Residue H327 is the Proton acceptor of the active site. Residues K406 and 410–417 each bind CoA; that span reads KEEALHPD. Residue K406 is modified to N6-acetyllysine; alternate. An N6-succinyllysine; alternate modification is found at K406. Residues Y439, T441, and T452 each contribute to the (R)-carnitine site. Residues 610–612 carry the Microbody targeting signal motif; it reads AHL.

Belongs to the carnitine/choline acetyltransferase family.

The protein localises to the peroxisome. The enzyme catalyses octanoyl-CoA + (R)-carnitine = O-octanoyl-(R)-carnitine + CoA. It catalyses the reaction 4,8-dimethylnonanoyl-CoA + (R)-carnitine = O-4,8-dimethylnonanoyl-(R)-carnitine + CoA. The protein operates within lipid metabolism; fatty acid beta-oxidation. Its function is as follows. Beta-oxidation of fatty acids. The highest activity concerns the C6 to C10 chain length substrate. The chain is Peroxisomal carnitine O-octanoyltransferase (Crot) from Mus musculus (Mouse).